Consider the following 339-residue polypeptide: Anthranilate phosphoribosyltransferase (339 aa).

Residues Gly-79, 82–83, Ser-87, 89–92, 107–115, and Ser-119 each bind 5-phospho-alpha-D-ribose 1-diphosphate; these read GD, NIST, and KHGNRSISS. Residue Gly-79 participates in anthranilate binding. Ser-91 serves as a coordination point for Mg(2+). Residue Asn-110 coordinates anthranilate. Arg-165 is an anthranilate binding site. Residues Asp-224 and Glu-225 each coordinate Mg(2+).

This sequence belongs to the anthranilate phosphoribosyltransferase family. Homodimer. Requires Mg(2+) as cofactor.

The enzyme catalyses N-(5-phospho-beta-D-ribosyl)anthranilate + diphosphate = 5-phospho-alpha-D-ribose 1-diphosphate + anthranilate. The protein operates within amino-acid biosynthesis; L-tryptophan biosynthesis; L-tryptophan from chorismate: step 2/5. Catalyzes the transfer of the phosphoribosyl group of 5-phosphorylribose-1-pyrophosphate (PRPP) to anthranilate to yield N-(5'-phosphoribosyl)-anthranilate (PRA). The protein is Anthranilate phosphoribosyltransferase of Listeria monocytogenes serotype 4b (strain CLIP80459).